Reading from the N-terminus, the 316-residue chain is Transcription initiation factor IIB (316 aa).

The segment at 11-42 (PRVTCPNHPDAILVEDYRAGDMICPECGLVVG) adopts a TFIIB-type zinc-finger fold. 4 residues coordinate Zn(2+): cysteine 15, histidine 18, cysteine 34, and cysteine 37. Phosphoserine occurs at positions 70, 76, and 92. Repeat copies occupy residues 124 to 200 (MADR…LILK) and 218 to 294 (FCSN…LIYP). Residues lysine 152, arginine 154, lysine 189, and lysine 196 each contribute to the DNA site. The segment at 189–193 (KEIGR) is core promoter DNA-binding. The residue at position 238 (lysine 238) is an N6-acetyllysine; by autocatalysis. Positions 244–316 (LVPGRSPISV…DTPVDKLPQL (73 aa)) are necessary for TATA box-bound TBP complex formation. Arginine 248 is a DNA binding site. A core promoter DNA-binding region spans residues 249 to 252 (SPIS). The DNA site is built by lysine 272, alanine 281, threonine 284, arginine 286, and arginine 290. The interval 283 to 286 (VTIR) is core promoter DNA-binding.

Belongs to the TFIIB family. Found in a ternary complex with TATA box-bound TBP. Part of a TFIID-containing RNA polymerase II pre-initiation complex (PIC) that is composed of TBP and at least GTF2A1, GTF2A2, GTF2E1, GTF2E2, GTF2F1, GTF2H2, GTF2H3, GTF2H4, GTF2H5, GTF2B, TCEA1, ERCC2, ERCC3, TAF1, TAF2, TAF3, TAF4, TAF5, TAF6, TAF7, TAF8, TAF9, TAF10, TAF11, TAF12 and TAF13. Associates with TFIID-TFIIA (DA complex) to form TFIID-TFIIA-TFIIB (DAB complex), which is then recognized by RNA polymerase II (Pol II). Found in a RNA polymerase II initiation complex. Interacts (via C-terminus) with TBP; this interaction with TATA box-bound TBP guides Pol II into the PIC. Interacts (via N-terminus) with Pol II. Interacts (via C-terminus) with SSU72; this interaction is inhibited by SYMPK. Interacts with NR2F1; this interaction is direct. Interacts with PGR. Interacts with ESR1. Interacts with GTF2F1 (via C-terminus and preferentially via acetylated form); this interaction prevents binding of GTF2B to GTF2F2. Interacts with GTF2F2 (via N-terminus); this interaction is inhibited in presence of GTF2F1. Interacts with the transcription elongation factor TCEA2. Interacts with HSF1 (via transactivation domain). Interacts with GPBP1. Acetylated. Autoacetylated; autoacetylation at Lys-238 stimulates transcription activation.

The protein resides in the nucleus. The protein localises to the chromosome. The catalysed reaction is L-lysyl-[protein] + acetyl-CoA = N(6)-acetyl-L-lysyl-[protein] + CoA + H(+). Its function is as follows. General transcription factor that plays a role in transcription initiation by RNA polymerase II (Pol II). Involved in the pre-initiation complex (PIC) formation and Pol II recruitment at promoter DNA. Together with the TATA box-bound TBP forms the core initiation complex and provides a bridge between TBP and the Pol II-TFIIF complex. Released from the PIC early following the onset of transcription during the initiation and elongation transition and reassociates with TBP during the next transcription cycle. Associates with chromatin to core promoter-specific regions. Binds to two distinct DNA core promoter consensus sequence elements in a TBP-independent manner; these IIB-recognition elements (BREs) are localized immediately upstream (BREu), 5'-[GC][GC][GA]CGCC-3', and downstream (BREd), 5'-[GA]T[TGA][TG][GT][TG][TG]-3', of the TATA box element. Modulates transcription start site selection. Also exhibits autoacetyltransferase activity that contributes to the activated transcription. The protein is Transcription initiation factor IIB of Mus musculus (Mouse).